Here is a 208-residue protein sequence, read N- to C-terminus: FMN-dependent NADH:quinone oxidoreductase (208 aa).

Residues His-10, 17–19, 104–107, 148–153, and Asp-184 each bind FMN; these read SRS, MWNL, and SNGGFY.

Belongs to the azoreductase type 1 family. Homodimer. Requires FMN as cofactor.

It catalyses the reaction 2 a quinone + NADH + H(+) = 2 a 1,4-benzosemiquinone + NAD(+). The enzyme catalyses N,N-dimethyl-1,4-phenylenediamine + anthranilate + 2 NAD(+) = 2-(4-dimethylaminophenyl)diazenylbenzoate + 2 NADH + 2 H(+). Functionally, quinone reductase that provides resistance to thiol-specific stress caused by electrophilic quinones. In terms of biological role, also exhibits azoreductase activity. Catalyzes the reductive cleavage of the azo bond in aromatic azo compounds to the corresponding amines. Requires NADH, but not NADPH, as an electron donor for its activity. The enzyme can also reduce a wide range of sulfonated azo dyes. The substrate preference order is methyl Red &gt; Orange II &gt; Ponceau BS &gt; Ponceau S &gt; Orange G &gt; Amaranth. This is FMN-dependent NADH:quinone oxidoreductase from Enterococcus faecalis (strain ATCC 700802 / V583).